We begin with the raw amino-acid sequence, 104 residues long: Zinc-containing ferredoxin-1 (104 aa).

An N-terminal extension region spans residues Gly2–Thr37. Residues His17 and His20 each contribute to the Zn(2+) site. An N6-methyllysine modification is found at Lys30. Residue His35 coordinates Zn(2+). 2 consecutive 4Fe-4S ferredoxin-type domains span residues Ile38–Thr66 and Lys75–Pro104. 2 residues coordinate [3Fe-4S] cluster: Cys46 and Cys52. Cys56 is a binding site for [4Fe-4S] cluster. Asp77 contributes to the Zn(2+) binding site. The [4Fe-4S] cluster site is built by Cys84, Cys87, and Cys90. Cys94 provides a ligand contact to [3Fe-4S] cluster.

[3Fe-4S] cluster is required as a cofactor. Requires [4Fe-4S] cluster as cofactor. Zn(2+) serves as cofactor.

Its function is as follows. Ferredoxins are iron-sulfur proteins that transfer electrons in a wide variety of metabolic reactions. This Sulfurisphaera tokodaii (strain DSM 16993 / JCM 10545 / NBRC 100140 / 7) (Sulfolobus tokodaii) protein is Zinc-containing ferredoxin-1 (zfx1).